The primary structure comprises 67 residues: Probable Sec-independent protein translocase protein TatE (67 aa).

The helical transmembrane segment at 1 to 21 (MGEISITKLLVVAALVVLLFG) threads the bilayer. The segment at 45 to 67 (DEDAGAKKDANGDLPAEKLTHKE) is disordered.

Belongs to the TatA/E family. TatE subfamily.

The protein resides in the cell inner membrane. Part of the twin-arginine translocation (Tat) system that transports large folded proteins containing a characteristic twin-arginine motif in their signal peptide across membranes. TatE shares overlapping functions with TatA. This Escherichia fergusonii (strain ATCC 35469 / DSM 13698 / CCUG 18766 / IAM 14443 / JCM 21226 / LMG 7866 / NBRC 102419 / NCTC 12128 / CDC 0568-73) protein is Probable Sec-independent protein translocase protein TatE.